Consider the following 242-residue polypeptide: MSALAVALARQSESHADCPLFNDPYAQVFIDAALSRGCQLPSDETSERINGIANYASSRTKWFDEYFIAAGAHGLEQMVIVAAGLDARAWRLPWVAGTTLFEIDHPGVLKFKNEALHEHGESPSVSRYVPVPADLSDGWSERLRDAGFDVSEPTAWAVEGLLPYVADGPHLLFDRIHEISPAGSRLAVEAVGTGVADWLSTQGWQVTMIGAQELMTRYGRCGDHSDTDAGMDTVFVNATRTR.

S-adenosyl-L-methionine is bound by residues Asp104 and 134–135; that span reads DL.

It belongs to the UPF0677 family.

In terms of biological role, exhibits S-adenosyl-L-methionine-dependent methyltransferase activity. The polypeptide is Putative S-adenosyl-L-methionine-dependent methyltransferase Mmcs_0580 (Mycobacterium sp. (strain MCS)).